The primary structure comprises 1343 residues: DNA-directed RNA polymerase subunit beta (1343 aa).

The protein belongs to the RNA polymerase beta chain family. As to quaternary structure, the RNAP catalytic core consists of 2 alpha, 1 beta, 1 beta' and 1 omega subunit. When a sigma factor is associated with the core the holoenzyme is formed, which can initiate transcription.

The enzyme catalyses RNA(n) + a ribonucleoside 5'-triphosphate = RNA(n+1) + diphosphate. DNA-dependent RNA polymerase catalyzes the transcription of DNA into RNA using the four ribonucleoside triphosphates as substrates. The sequence is that of DNA-directed RNA polymerase subunit beta from Haemophilus influenzae (strain PittGG).